Consider the following 476-residue polypeptide: Probable coniferyl aldehyde dehydrogenase (476 aa).

Active-site residues include Glu225 and Cys259.

This sequence belongs to the aldehyde dehydrogenase family. In terms of assembly, homodimer.

It carries out the reaction (E)-coniferaldehyde + NADP(+) + H2O = (E)-ferulate + NADPH + 2 H(+). The catalysed reaction is (E)-coniferaldehyde + NAD(+) + H2O = (E)-ferulate + NADH + 2 H(+). This chain is Probable coniferyl aldehyde dehydrogenase (calB), found in Pseudomonas aeruginosa (strain ATCC 15692 / DSM 22644 / CIP 104116 / JCM 14847 / LMG 12228 / 1C / PRS 101 / PAO1).